A 224-amino-acid chain; its full sequence is MAPGSVLSLAVALATIIGISCTATVDETMRWKECLNTNQSIFDFQIETLQGEYTDLSQYRGKVILLVNVATFCAYTQQYTDFNPMLEKYQAQGLTLVAFPCNQFYLQEPAENHELMNGLTYVRPGNGWTPHQELHIYGKIDVNGDNHHPLYEFVKESCPQTVDKIGKTDELMYNPVRPSDITWNFEKFLIDRNGQPRFRFHPTAWSHGDVVTPFIEQLLAEPAN.

An N-terminal signal peptide occupies residues 1-18; it reads MAPGSVLSLAVALATIIG. N-linked (GlcNAc...) asparagine glycosylation is present at Asn-38. The active site involves Cys-73.

It belongs to the glutathione peroxidase family.

Its subcellular location is the secreted. The protein resides in the extracellular space. The enzyme catalyses 2 glutathione + H2O2 = glutathione disulfide + 2 H2O. The polypeptide is Glutathione peroxidase 3 (gpx-3) (Caenorhabditis elegans).